A 396-amino-acid chain; its full sequence is Glycerate kinase (396 aa).

This sequence belongs to the glycerate kinase type-2 family.

It is found in the cytoplasm. It carries out the reaction (R)-glycerate + ATP = (2R)-3-phosphoglycerate + ADP + H(+). This is Glycerate kinase (GLYCTK) from Macaca fascicularis (Crab-eating macaque).